The primary structure comprises 571 residues: Isocitrate dehydrogenase kinase/phosphatase (571 aa).

ATP contacts are provided by residues 318–324 and Lys339; that span reads APGVRGM. The active site involves Asp374.

Belongs to the AceK family.

The protein resides in the cytoplasm. The catalysed reaction is L-seryl-[isocitrate dehydrogenase] + ATP = O-phospho-L-seryl-[isocitrate dehydrogenase] + ADP + H(+). Bifunctional enzyme which can phosphorylate or dephosphorylate isocitrate dehydrogenase (IDH) on a specific serine residue. This is a regulatory mechanism which enables bacteria to bypass the Krebs cycle via the glyoxylate shunt in response to the source of carbon. When bacteria are grown on glucose, IDH is fully active and unphosphorylated, but when grown on acetate or ethanol, the activity of IDH declines drastically concomitant with its phosphorylation. The sequence is that of Isocitrate dehydrogenase kinase/phosphatase from Pseudomonas entomophila (strain L48).